Reading from the N-terminus, the 1284-residue chain is Kinesin-like protein KIN-4C (1284 aa).

Residues 12-364 (SVKVVVNIRP…LKYANRARNI (353 aa)) form the Kinesin motor domain. An ATP-binding site is contributed by 91-98 (GQTGSGKT). Coiled coils occupy residues 407–445 (SAAL…EQLA), 561–711 (RDHS…QFRS), and 911–950 (MCKE…NMLL). Disordered regions lie at residues 1040 to 1070 (RRQT…SQEK) and 1158 to 1284 (MSEK…NHLR). The span at 1043 to 1070 (TVSSHLNPNPGSGTTQKSAKSEMASQEK) shows a compositional bias: polar residues. 2 stretches are compositionally biased toward basic and acidic residues: residues 1158-1172 (MSEK…RKPL) and 1275-1284 (NANEKENHLR).

It belongs to the TRAFAC class myosin-kinesin ATPase superfamily. Kinesin family. KIN-4 subfamily. In terms of assembly, homodimer.

Functionally, microtubule-dependent motor protein involved in the control of the oriented deposition of cellulose microfibrils. In Oryza sativa subsp. japonica (Rice), this protein is Kinesin-like protein KIN-4C.